Consider the following 367-residue polypeptide: Apurinic-apyrimidinic endonuclease 1 (367 aa).

Zn(2+) contacts are provided by histidine 83, histidine 123, glutamate 158, aspartate 192, histidine 195, histidine 229, aspartate 242, histidine 244, and glutamate 274. The interval 312 to 367 is disordered; sequence DTLQKLGAKSRKEQLDKFEVKQKKRAGGTKRKKATAEPSDNDILSQMTKKRKTKKE. Residues 321-332 show a composition bias toward basic and acidic residues; sequence SRKEQLDKFEVK. Positions 333–344 are enriched in basic residues; that stretch reads QKKRAGGTKRKK. At serine 356 the chain carries Phosphoserine.

The protein belongs to the AP endonuclease 2 family. As to quaternary structure, monomer. Requires Zn(2+) as cofactor.

The protein localises to the nucleus. Functionally, DNA repair enzyme that cleaves apurinic/apyrimidinic (AP) sites and removes 3'-blocking groups present at single strand breaks of damaged DNA. APN1 accounts for &gt; 97% of both apurinic/apyrimidinic (AP) endonuclease and DNA 3'-repair diesterase activities. The protein is Apurinic-apyrimidinic endonuclease 1 (APN1) of Saccharomyces cerevisiae (strain ATCC 204508 / S288c) (Baker's yeast).